The sequence spans 318 residues: Ribose-phosphate pyrophosphokinase 1 (318 aa).

ATP is bound at residue 96–101 (RQDKKD). D128, H130, D139, and D143 together coordinate Mg(2+). ATP is bound at residue H130. Residues 212–227 (KDRVAILVDDMADTCG) form a binding of phosphoribosylpyrophosphate region.

Belongs to the ribose-phosphate pyrophosphokinase family. As to quaternary structure, homodimer. The active form is probably a hexamer composed of 3 homodimers. The cofactor is Mg(2+).

The catalysed reaction is D-ribose 5-phosphate + ATP = 5-phospho-alpha-D-ribose 1-diphosphate + AMP + H(+). It functions in the pathway metabolic intermediate biosynthesis; 5-phospho-alpha-D-ribose 1-diphosphate biosynthesis; 5-phospho-alpha-D-ribose 1-diphosphate from D-ribose 5-phosphate (route I): step 1/1. Its activity is regulated as follows. Activated by magnesium and inorganic phosphate. Catalyzes the synthesis of phosphoribosylpyrophosphate (PRPP) that is essential for nucleotide synthesis. The protein is Ribose-phosphate pyrophosphokinase 1 (PRPS1) of Macaca fascicularis (Crab-eating macaque).